The chain runs to 202 residues: Small ribosomal subunit protein uS4c (202 aa).

An S4 RNA-binding domain is found at 90–153 (MRLDNVTFRL…KSETIISKNI (64 aa)).

This sequence belongs to the universal ribosomal protein uS4 family. Part of the 30S ribosomal subunit. Contacts protein S5. The interaction surface between S4 and S5 is involved in control of translational fidelity.

It is found in the plastid. The protein resides in the chloroplast. Its function is as follows. One of the primary rRNA binding proteins, it binds directly to 16S rRNA where it nucleates assembly of the body of the 30S subunit. Functionally, with S5 and S12 plays an important role in translational accuracy. The chain is Small ribosomal subunit protein uS4c (rps4) from Hypnum cupressiforme (Cypress-leaved plait-moss).